The chain runs to 161 residues: Small ribosomal subunit protein eS6 (161 aa).

Positions 119-161 (VLLGEEEPEDADDDGDSDVDADEATDTDAGSEEDNDDDIADAE) are disordered. Residues 122–161 (GEEEPEDADDDGDSDVDADEATDTDAGSEEDNDDDIADAE) show a composition bias toward acidic residues.

Belongs to the eukaryotic ribosomal protein eS6 family.

The chain is Small ribosomal subunit protein eS6 from Haloquadratum walsbyi (strain DSM 16790 / HBSQ001).